Here is a 634-residue protein sequence, read N- to C-terminus: Chaperone protein DnaK (634 aa).

Position 197 is a phosphothreonine; by autocatalysis (Thr197). A compositionally biased stretch (basic and acidic residues) spans 515 to 528; the sequence is LHKEDDKKRKESVD. Disordered stretches follow at residues 515–536 and 595–634; these read LHKEDDKKRKESVDARNGADAI and YKAASAGKNAGGTAGGNGNAGSNGNSGAKKDDDVIDAEVE. A compositionally biased stretch (gly residues) spans 603-615; sequence NAGGTAGGNGNAG.

Belongs to the heat shock protein 70 family.

Its function is as follows. Acts as a chaperone. This chain is Chaperone protein DnaK, found in Campylobacter hominis (strain ATCC BAA-381 / DSM 21671 / CCUG 45161 / LMG 19568 / NCTC 13146 / CH001A).